Reading from the N-terminus, the 553-residue chain is Cysteine desulfurase IscS (553 aa).

A compositionally biased stretch (low complexity) spans asparagine 102 to asparagine 122. A disordered region spans residues asparagine 102–glycine 125.

Belongs to the class-V pyridoxal-phosphate-dependent aminotransferase family. NifS/IscS subfamily. As to quaternary structure, homotetramer. Interacts with Isd11; the interaction enhances cysteine desulfurase activity of IscS. Interacts with IscU. Component of a complex, at least composed of IscS, Isd11 and IscU. Pyridoxal 5'-phosphate is required as a cofactor.

The protein localises to the mitochondrion. It carries out the reaction (sulfur carrier)-H + L-cysteine = (sulfur carrier)-SH + L-alanine. It participates in cofactor biosynthesis; iron-sulfur cluster biosynthesis. Catalyzes sulfur activation and mobilization in iron-sulfur cluster formation (ISC) pathway for iron-sulfur (Fe-S) cluster biogenesis. Active when in complex with a partner protein Isd11. In Plasmodium falciparum (isolate 3D7), this protein is Cysteine desulfurase IscS.